Reading from the N-terminus, the 487-residue chain is Acetyl-coenzyme A carboxylase carboxyl transferase subunit beta, chloroplastic (487 aa).

Residues 223–487 enclose the CoA carboxyltransferase N-terminal domain; sequence LWIQCDNCYG…FCPLNKTEIK (265 aa). Zn(2+)-binding residues include Cys227, Cys230, Cys243, and Cys246. The C4-type zinc-finger motif lies at 227-246; sequence CDNCYGLMYKKVKMNVCEQC.

Belongs to the AccD/PCCB family. In terms of assembly, acetyl-CoA carboxylase is a heterohexamer composed of biotin carboxyl carrier protein, biotin carboxylase and 2 subunits each of ACCase subunit alpha and ACCase plastid-coded subunit beta (accD). Zn(2+) serves as cofactor.

The protein localises to the plastid. Its subcellular location is the chloroplast stroma. The catalysed reaction is N(6)-carboxybiotinyl-L-lysyl-[protein] + acetyl-CoA = N(6)-biotinyl-L-lysyl-[protein] + malonyl-CoA. The protein operates within lipid metabolism; malonyl-CoA biosynthesis; malonyl-CoA from acetyl-CoA: step 1/1. In terms of biological role, component of the acetyl coenzyme A carboxylase (ACC) complex. Biotin carboxylase (BC) catalyzes the carboxylation of biotin on its carrier protein (BCCP) and then the CO(2) group is transferred by the transcarboxylase to acetyl-CoA to form malonyl-CoA. The protein is Acetyl-coenzyme A carboxylase carboxyl transferase subunit beta, chloroplastic of Nasturtium officinale (Watercress).